A 360-amino-acid chain; its full sequence is GTPase Obg (360 aa).

One can recognise an Obg domain in the interval 1–156; sequence MFVDSVEIII…KCVRLELKLI (156 aa). The region spanning 157–360 is the OBG-type G domain; sequence ADIGLVGFPN…LKFVLLEALP (204 aa). GTP is bound by residues 163 to 170, 188 to 192, 210 to 213, 279 to 282, and 341 to 343; these read GFPNAGKS, FTTLV, DIPG, NKCD, and SAV. The Mg(2+) site is built by Ser170 and Thr190.

It belongs to the TRAFAC class OBG-HflX-like GTPase superfamily. OBG GTPase family. As to quaternary structure, monomer. It depends on Mg(2+) as a cofactor.

It is found in the cytoplasm. Functionally, an essential GTPase which binds GTP, GDP and possibly (p)ppGpp with moderate affinity, with high nucleotide exchange rates and a fairly low GTP hydrolysis rate. Plays a role in control of the cell cycle, stress response, ribosome biogenesis and in those bacteria that undergo differentiation, in morphogenesis control. The polypeptide is GTPase Obg (Helicobacter pylori (strain HPAG1)).